A 415-amino-acid polypeptide reads, in one-letter code: Gamma-glutamyl phosphate reductase (415 aa).

The protein belongs to the gamma-glutamyl phosphate reductase family.

The protein resides in the cytoplasm. It carries out the reaction L-glutamate 5-semialdehyde + phosphate + NADP(+) = L-glutamyl 5-phosphate + NADPH + H(+). The protein operates within amino-acid biosynthesis; L-proline biosynthesis; L-glutamate 5-semialdehyde from L-glutamate: step 2/2. Catalyzes the NADPH-dependent reduction of L-glutamate 5-phosphate into L-glutamate 5-semialdehyde and phosphate. The product spontaneously undergoes cyclization to form 1-pyrroline-5-carboxylate. The sequence is that of Gamma-glutamyl phosphate reductase from Salmonella dublin (strain CT_02021853).